A 200-amino-acid chain; its full sequence is Recombination protein RecR (200 aa).

A C4-type zinc finger spans residues 57 to 72; sequence CSHCRTFTENERCEIC. Residues 81–176 enclose the Toprim domain; that stretch reads GLLCVVESPA…KVSRIAHGVP (96 aa).

Belongs to the RecR family.

Its function is as follows. May play a role in DNA repair. It seems to be involved in an RecBC-independent recombinational process of DNA repair. It may act with RecF and RecO. The chain is Recombination protein RecR from Aeromonas hydrophila subsp. hydrophila (strain ATCC 7966 / DSM 30187 / BCRC 13018 / CCUG 14551 / JCM 1027 / KCTC 2358 / NCIMB 9240 / NCTC 8049).